The sequence spans 99 residues: Putative pterin-4-alpha-carbinolamine dehydratase (99 aa).

The protein belongs to the pterin-4-alpha-carbinolamine dehydratase family.

It carries out the reaction (4aS,6R)-4a-hydroxy-L-erythro-5,6,7,8-tetrahydrobiopterin = (6R)-L-erythro-6,7-dihydrobiopterin + H2O. This is Putative pterin-4-alpha-carbinolamine dehydratase from Aquifex aeolicus (strain VF5).